Consider the following 446-residue polypeptide: Radical S-adenosyl methionine domain-containing protein 1, mitochondrial (446 aa).

The 263-residue stretch at 15–277 folds into the Radical SAM core domain; the sequence is KGYNKLKDLP…VCEAEAMGFQ (263 aa). 3 residues coordinate [4Fe-4S] cluster: Cys-34, Cys-38, and Cys-41. Residues Gly-94, 95-96, Glu-130, Gln-159, Arg-171, and Asp-195 each bind S-adenosyl-L-methionine; that span reads GT.

Belongs to the anaerobic coproporphyrinogen-III oxidase family. HemW subfamily.

The protein resides in the mitochondrion. Its function is as follows. May be a heme chaperone, appears to bind heme. Homologous bacterial proteins do not have oxygen-independent coproporphyrinogen-III oxidase activity. Binds 1 [4Fe-4S] cluster. The cluster is coordinated with 3 cysteines and an exchangeable S-adenosyl-L-methionine. In Dictyostelium discoideum (Social amoeba), this protein is Radical S-adenosyl methionine domain-containing protein 1, mitochondrial (rsad1).